We begin with the raw amino-acid sequence, 106 residues long: Toxin-like structure LSTX-D7 (106 aa).

Positions 1–20 (MMKVLVVFALLVTLISYSSS) are cleaved as a signal peptide. Residues 21 to 41 (EGIDDLEADELLSLMANEQTR) constitute a propeptide that is removed on maturation. 4 disulfide bridges follow: C45–C60, C52–C69, C59–C85, and C71–C83.

It belongs to the neurotoxin 19 (CSTX) family. 02 (D7) subfamily. As to expression, expressed by the venom gland.

It localises to the secreted. The chain is Toxin-like structure LSTX-D7 from Lycosa singoriensis (Wolf spider).